The chain runs to 207 residues: Phenazine biosynthesis protein PhzD (207 aa).

Asp-38 (proton donor) is an active-site residue. Substrate is bound by residues Gln-78, Arg-87, Lys-122, and 151–155; that span reads YAHVG.

Belongs to the isochorismatase family. As to quaternary structure, homodimer.

It catalyses the reaction (2S)-2-amino-4-deoxychorismate + H2O = (5S,6S)-6-amino-5-hydroxycyclohexa-1,3-diene-1-carboxyate + pyruvate. The protein operates within antibiotic biosynthesis; phenazine biosynthesis. Involved in the biosynthesis of the antibiotic phenazine, a nitrogen-containing heterocyclic molecule having important roles in virulence, competition and biological control. Catalyzes the hydrolysis of the vinyl ether functional group of 2-amino-2-deoxyisochorismate (ADIC), yielding pyruvate and trans-2,3-dihydro-3-hydroxyanthranilic acid (DHHA). The polypeptide is Phenazine biosynthesis protein PhzD (Pseudomonas fluorescens).